The following is a 654-amino-acid chain: Cysteine-rich receptor-like protein kinase 40 (654 aa).

An N-terminal signal peptide occupies residues 1-27; sequence MGKCSALMIFLSSSLLLVLQTLHVVNA. 2 Gnk2-homologous domains span residues 28–131 and 143–250; these read VKCF…NQST and WPSP…LYSF. The Extracellular portion of the chain corresponds to 28-287; the sequence is VKCFGNSFNG…VKKGKSIGYG (260 aa). 6 N-linked (GlcNAc...) asparagine glycosylation sites follow: N38, N65, N128, N154, N167, and N256. Residues 288–308 form a helical membrane-spanning segment; it reads GIIAIVVVFTFINLLVFIGFI. Topologically, residues 309–654 are cytoplasmic; that stretch reads KVYARRGKLN…DDVFTELSCR (346 aa). The 272-residue stretch at 348–619 folds into the Protein kinase domain; it reads FSSENTLGQG…VIIWLGSETI (272 aa). Residues 354–362 and K376 each bind ATP; that span reads LGQGGFGTV. Y421 carries the post-translational modification Phosphotyrosine. Residue D473 is the Proton acceptor of the active site. Phosphoserine is present on S477. T513 bears the Phosphothreonine mark. Position 521 is a phosphotyrosine (Y521).

This sequence belongs to the protein kinase superfamily. Ser/Thr protein kinase family. CRK subfamily.

It localises to the membrane. It carries out the reaction L-seryl-[protein] + ATP = O-phospho-L-seryl-[protein] + ADP + H(+). The enzyme catalyses L-threonyl-[protein] + ATP = O-phospho-L-threonyl-[protein] + ADP + H(+). This Arabidopsis thaliana (Mouse-ear cress) protein is Cysteine-rich receptor-like protein kinase 40 (CRK40).